The following is a 373-amino-acid chain: Capsular polysaccharide phosphotransferase (373 aa).

It belongs to the stealth family.

In terms of biological role, part of a capsule gene locus. Expression was not detected under standard growth conditions. This Neisseria meningitidis serogroup B protein is Capsular polysaccharide phosphotransferase.